Reading from the N-terminus, the 1080-residue chain is Carbamoyl phosphate synthase large chain (1080 aa).

Positions 1 to 403 (MPKRTDLETI…SLQKALRGLE (403 aa)) are carboxyphosphate synthetic domain. ATP-binding residues include arginine 129, arginine 169, glycine 175, glycine 176, glutamate 208, valine 210, glutamate 215, glycine 241, valine 242, histidine 243, glutamine 285, and glutamate 299. The region spanning 133–328 (RVAMGEIGLD…IAKVAAKLAV (196 aa)) is the ATP-grasp 1 domain. The Mg(2+) site is built by glutamine 285, glutamate 299, and asparagine 301. Positions 285, 299, and 301 each coordinate Mn(2+). An oligomerization domain region spans residues 404-554 (TGKIGLDPTG…YSTYEDECEA (151 aa)). Positions 555–942 (LPTDRDKIMI…AFARAQEAGG (388 aa)) are carbamoyl phosphate synthetic domain. The ATP-grasp 2 domain maps to 679 to 876 (QQLVDKLGLK…LAKIAARCMA (198 aa)). Positions 715, 754, 756, 761, 787, 788, 789, 790, 830, and 847 each coordinate ATP. Positions 830, 847, and 849 each coordinate Mg(2+). Mn(2+) is bound by residues glutamine 830, glutamate 847, and asparagine 849. Residues 943-1080 (IKAPPLGKAF…LQELHKELEA (138 aa)) enclose the MGS-like domain. An allosteric domain region spans residues 943–1080 (IKAPPLGKAF…LQELHKELEA (138 aa)).

The protein belongs to the CarB family. In terms of assembly, composed of two chains; the small (or glutamine) chain promotes the hydrolysis of glutamine to ammonia, which is used by the large (or ammonia) chain to synthesize carbamoyl phosphate. Tetramer of heterodimers (alpha,beta)4. Mg(2+) serves as cofactor. Requires Mn(2+) as cofactor.

It carries out the reaction hydrogencarbonate + L-glutamine + 2 ATP + H2O = carbamoyl phosphate + L-glutamate + 2 ADP + phosphate + 2 H(+). It catalyses the reaction hydrogencarbonate + NH4(+) + 2 ATP = carbamoyl phosphate + 2 ADP + phosphate + 2 H(+). It functions in the pathway amino-acid biosynthesis; L-arginine biosynthesis; carbamoyl phosphate from bicarbonate: step 1/1. It participates in pyrimidine metabolism; UMP biosynthesis via de novo pathway; (S)-dihydroorotate from bicarbonate: step 1/3. Functionally, large subunit of the glutamine-dependent carbamoyl phosphate synthetase (CPSase). CPSase catalyzes the formation of carbamoyl phosphate from the ammonia moiety of glutamine, carbonate, and phosphate donated by ATP, constituting the first step of 2 biosynthetic pathways, one leading to arginine and/or urea and the other to pyrimidine nucleotides. The large subunit (synthetase) binds the substrates ammonia (free or transferred from glutamine from the small subunit), hydrogencarbonate and ATP and carries out an ATP-coupled ligase reaction, activating hydrogencarbonate by forming carboxy phosphate which reacts with ammonia to form carbamoyl phosphate. This chain is Carbamoyl phosphate synthase large chain, found in Xanthomonas axonopodis pv. citri (strain 306).